The sequence spans 322 residues: UDP-N-acetylenolpyruvoylglucosamine reductase (322 aa).

The FAD-binding PCMH-type domain occupies 36-202; sequence RAGGPAQVLF…TSVLFEGVPG (167 aa). Arg182 is an active-site residue. The active-site Proton donor is Ser231. Residue Glu301 is part of the active site.

This sequence belongs to the MurB family. It depends on FAD as a cofactor.

Its subcellular location is the cytoplasm. The enzyme catalyses UDP-N-acetyl-alpha-D-muramate + NADP(+) = UDP-N-acetyl-3-O-(1-carboxyvinyl)-alpha-D-glucosamine + NADPH + H(+). It participates in cell wall biogenesis; peptidoglycan biosynthesis. Cell wall formation. The polypeptide is UDP-N-acetylenolpyruvoylglucosamine reductase (Brucella canis (strain ATCC 23365 / NCTC 10854 / RM-666)).